The sequence spans 150 residues: Transcriptional repressor NrdR (150 aa).

A zinc finger spans residues 3-34; sequence CPFCNASDTKVVDTRASEDDKIVRRRRECISC. Residues 49–139 enclose the ATP-cone domain; the sequence is LTVVKKDKNR…VYREFTDVKS (91 aa).

It belongs to the NrdR family. The cofactor is Zn(2+).

Functionally, negatively regulates transcription of bacterial ribonucleotide reductase nrd genes and operons by binding to NrdR-boxes. The polypeptide is Transcriptional repressor NrdR (Finegoldia magna (strain ATCC 29328 / DSM 20472 / WAL 2508) (Peptostreptococcus magnus)).